The following is a 156-amino-acid chain: Small ribosomal subunit protein uS7 (156 aa).

It belongs to the universal ribosomal protein uS7 family. In terms of assembly, part of the 30S ribosomal subunit. Contacts proteins S9 and S11.

Its function is as follows. One of the primary rRNA binding proteins, it binds directly to 16S rRNA where it nucleates assembly of the head domain of the 30S subunit. Is located at the subunit interface close to the decoding center, probably blocks exit of the E-site tRNA. The chain is Small ribosomal subunit protein uS7 from Shewanella amazonensis (strain ATCC BAA-1098 / SB2B).